The chain runs to 487 residues: GTPase Der (487 aa).

2 EngA-type G domains span residues 3-166 and 193-366; these read PVIA…PRDA and IKIA…KSAV. GTP is bound by residues 9–16, 56–60, 118–121, 199–206, 246–250, and 311–314; these read GRPNVGKS, DTGGI, NKID, DTAGV, and NKWD. The KH-like domain occupies 367-451; it reads TRWPTSRLTQ…PIRIEYKGGE (85 aa). Basic and acidic residues predominate over residues 448–461; it reads KGGENPYEGKKNTL. Residues 448–487 form a disordered region; that stretch reads KGGENPYEGKKNTLTDRQVNKKRRLMSHHKKAEKKRRDKR. Positions 467 to 487 are enriched in basic residues; that stretch reads NKKRRLMSHHKKAEKKRRDKR.

This sequence belongs to the TRAFAC class TrmE-Era-EngA-EngB-Septin-like GTPase superfamily. EngA (Der) GTPase family. Associates with the 50S ribosomal subunit.

Its function is as follows. GTPase that plays an essential role in the late steps of ribosome biogenesis. This is GTPase Der from Pseudomonas putida (strain W619).